We begin with the raw amino-acid sequence, 243 residues long: NADH-ubiquinone oxidoreductase chain 6 (243 aa).

The next 5 helical transmembrane spans lie at Ile-16–Val-36, Ile-41–Leu-61, Ala-69–Ile-89, Ile-104–Tyr-124, and Ile-201–Ile-221.

Belongs to the complex I subunit 6 family.

The protein resides in the mitochondrion membrane. It catalyses the reaction a ubiquinone + NADH + 5 H(+)(in) = a ubiquinol + NAD(+) + 4 H(+)(out). In terms of biological role, core subunit of the mitochondrial membrane respiratory chain NADH dehydrogenase (Complex I) that is believed to belong to the minimal assembly required for catalysis. Complex I functions in the transfer of electrons from NADH to the respiratory chain. The immediate electron acceptor for the enzyme is believed to be ubiquinone. The chain is NADH-ubiquinone oxidoreductase chain 6 (ndh-6) from Neurospora crassa (strain ATCC 24698 / 74-OR23-1A / CBS 708.71 / DSM 1257 / FGSC 987).